The following is a 382-amino-acid chain: uncharacterized protein (382 aa).

12 helical membrane-spanning segments follow: residues 14–34 (GLLL…LWLA), 45–65 (VVSS…GYVI), 79–99 (FIFA…SWLA), 102–122 (FVAG…LMCS), 131–151 (LLAA…LLVS), 157–177 (LMSV…PLLF), 204–224 (LGVN…GLMP), 235–255 (ASIG…QWPI), 270–290 (VQVF…AMAP), 291–311 (ALFI…AWAC), 325–345 (ALLL…AMLM), and 348–368 (FSDN…LLML).

The protein belongs to the major facilitator superfamily. YcaD (TC 2.A.1.26) family.

It is found in the cell inner membrane. This is an uncharacterized protein from Escherichia coli (strain K12 / MC4100 / BW2952).